Here is a 236-residue protein sequence, read N- to C-terminus: Ribosome maturation protein SDO1 homolog (236 aa).

Belongs to the SDO1/SBDS family. As to quaternary structure, crystallized in association with 70S ribosomes.

The polypeptide is Ribosome maturation protein SDO1 homolog (Thermococcus kodakarensis (strain ATCC BAA-918 / JCM 12380 / KOD1) (Pyrococcus kodakaraensis (strain KOD1))).